We begin with the raw amino-acid sequence, 729 residues long: Solute carrier family 15 member 2 (729 aa).

The disordered stretch occupies residues 1–34 (MNPFQKNESKETLFSPVSIEEVPPRPPSPPKKPS). Residues 1-57 (MNPFQKNESKETLFSPVSIEEVPPRPPSPPKKPSPTICGSNYPLSIAFIVVNEFCER) are Cytoplasmic-facing. The residue at position 9 (Ser-9) is a Phosphoserine. Thr-12 carries the post-translational modification Phosphothreonine. The segment covering 24–33 (PRPPSPPKKP) has biased composition (pro residues). Position 28 is a phosphoserine (Ser-28). A helical membrane pass occupies residues 58 to 78 (FSYYGMKAVLILYFLYFLHWN). Residues 79 to 83 (EDTST) lie on the Extracellular side of the membrane. The helical transmembrane segment at 84–104 (SIYHAFSSLCYFTPILGAAIA) threads the bilayer. Residues 105–113 (DSWLGKFKT) lie on the Cytoplasmic side of the membrane. Residues 114–134 (IIYLSLVYVLGHVIKSLGALP) form a helical membrane-spanning segment. The Extracellular portion of the chain corresponds to 135–139 (ILGGQ). Residues 140–160 (VVHTVLSLIGLSLIALGTGGI) form a helical membrane-spanning segment. At 161–183 (KPCVAAFGGDQFEEKHAEERTRY) the chain is on the cytoplasmic side. Residues 184 to 204 (FSVFYLSINAGSLISTFITPM) form a helical membrane-spanning segment. Residues 205 to 217 (LRGDVQCFGEDCY) lie on the Extracellular side of the membrane. The chain crosses the membrane as a helical span at residues 218–238 (ALAFGVPGLLMVIALVVFAMG). Residues 239-295 (SKIYNKPPPEGNIVAQVFKCIWFAISNRFKNRSGDIPKRQHWLDWAAEKYPKQLIMD) are Cytoplasmic-facing. A helical membrane pass occupies residues 296–316 (VKALTRVLFLYIPLPMFWALL). At 317 to 343 (DQQGSRWTLQAIRMNRNLGFFVLQPDQ) the chain is on the extracellular side. The helical transmembrane segment at 344-364 (MQVLNPLLVLIFIPLFDFVIY) threads the bilayer. Residues 365–380 (RLVSKCGINFSSLRKM) lie on the Cytoplasmic side of the membrane. A helical transmembrane segment spans residues 381-401 (AVGMILACLAFAVAAAVEIKI). Over 402–611 (NEMAPAQPGP…PANKMSIAWQ (210 aa)) the chain is Extracellular. The segment at 402 to 611 (NEMAPAQPGP…PANKMSIAWQ (210 aa)) is extracellular domain (ECD). Residues Asn-435, Asn-472, Asn-528, Asn-567, and Asn-587 are each glycosylated (N-linked (GlcNAc...) asparagine). Residues 612–632 (LPQYALVTAGEVMFSVTGLEF) traverse the membrane as a helical segment. At 633-643 (SYSQAPSSMKS) the chain is on the cytoplasmic side. Residues 644–664 (VLQAAWLLTIAVGNIIVLVVA) form a helical membrane-spanning segment. Topologically, residues 665–674 (QFSGLVQWAE) are extracellular. Residues 675–695 (FILFSCLLLVICLIFSIMGYY) traverse the membrane as a helical segment. Over 696 to 729 (YVPVKTEDMRGPADKHIPHIQGNMIKLETKKTKL) the chain is Cytoplasmic.

It belongs to the major facilitator superfamily. Proton-dependent oligopeptide transporter (POT/PTR) (TC 2.A.17) family. Interacts (via extracellular domain region) with trypsin. Expressed in kidney. Not detected in intestine. Highly expressed in macrophages.

The protein localises to the apical cell membrane. The protein resides in the cytoplasmic vesicle. It localises to the phagosome membrane. It is found in the cell membrane. The catalysed reaction is a dipeptide(out) + 2 H(+)(out) = a dipeptide(in) + 2 H(+)(in). It carries out the reaction N-acetyl-D-muramoyl-L-alanyl-D-isoglutamine(out) + 3 H(+)(out) = N-acetyl-D-muramoyl-L-alanyl-D-isoglutamine(in) + 3 H(+)(in). It catalyses the reaction glycyl-L-leucine(out) + 2 H(+)(out) = glycyl-L-leucine(in) + 2 H(+)(in). The enzyme catalyses glycyl-L-lysine(out) + 2 H(+)(out) = glycyl-L-lysine(in) + 2 H(+)(in). The catalysed reaction is glycyl-L-glutamate(out) + 3 H(+)(out) = glycyl-L-glutamate(in) + 3 H(+)(in). It carries out the reaction L-alanyl-L-alanine(out) + 2 H(+)(out) = L-alanyl-L-alanine(in) + 2 H(+)(in). It catalyses the reaction an L-amino acid tripeptide(out) + 2 H(+)(out) = an L-amino acid tripeptide(in) + 2 H(+)(in). The enzyme catalyses carnosine(out) + 2 H(+)(out) = carnosine(in) + 2 H(+)(in). Its function is as follows. Proton-coupled amino-acid transporter that transports oligopeptides of 2 to 4 amino acids with a preference for dipeptides. Transports neutral and anionic dipeptides with a proton to peptide stoichiometry of 2:1 or 3:1. In kidney, involved in the absorption of circulating di- and tripeptides from the glomerular filtrate. Can also transport beta-lactam antibiotics, such as the aminocephalosporin cefadroxil, and other antiviral and anticancer drugs. Transports the dipeptide-like aminopeptidase inhibitor bestatin. Also able to transport carnosine. Involved in innate immunity by promoting the detection of microbial pathogens by NOD-like receptors (NLRs). Mediates transport of bacterial peptidoglycans across the plasma membrane or, in macrophages, the phagosome membrane: catalyzes the transport of certain bacterial peptidoglycans, such as muramyl dipeptide (MDP), the NOD2 ligand. The polypeptide is Solute carrier family 15 member 2 (Homo sapiens (Human)).